An 87-amino-acid polypeptide reads, in one-letter code: MGIKFINIGYGNMVSAARIITIVSPDSAPIKRIIQDARESGKLVDATHGRRTRAVIIMDSDHVILSSVQPETVANRLYGSDDLSEEG.

It belongs to the RemA family.

This is Putative regulatory protein GWCH70_1057 from Geobacillus sp. (strain WCH70).